The chain runs to 127 residues: Fluoride-specific ion channel FluC (127 aa).

Transmembrane regions (helical) follow at residues 4–24 (LLLA…MLSM), 35–55 (LGTL…FAWF), 71–91 (TGFC…VFLL), and 103–123 (VLVN…IFSA). Positions 75 and 78 each coordinate Na(+).

The protein belongs to the fluoride channel Fluc/FEX (TC 1.A.43) family.

It localises to the cell inner membrane. The enzyme catalyses fluoride(in) = fluoride(out). Na(+) is not transported, but it plays an essential structural role and its presence is essential for fluoride channel function. Its function is as follows. Fluoride-specific ion channel. Important for reducing fluoride concentration in the cell, thus reducing its toxicity. This chain is Fluoride-specific ion channel FluC, found in Escherichia fergusonii (strain ATCC 35469 / DSM 13698 / CCUG 18766 / IAM 14443 / JCM 21226 / LMG 7866 / NBRC 102419 / NCTC 12128 / CDC 0568-73).